Here is an 882-residue protein sequence, read N- to C-terminus: Chondroitin sulfate synthase 3 (882 aa).

Topologically, residues 1–7 are cytoplasmic; it reads MAVRSRR. The chain crosses the membrane as a helical; Signal-anchor for type II membrane protein span at residues 8–28; that stretch reads PWMSVALGLVLGFTAASWLIA. Over 29-882 the chain is Lumenal; it reads PRVAELSERK…LGVRYNRTLS (854 aa). A disordered region spans residues 46–167; the sequence is SYYGRSAAGP…GDGGAAAPSA (122 aa). Composition is skewed to low complexity over residues 59-69 and 120-131; these read AQQPLPQPQSR and GATGLPGAPAAE. 3 N-linked (GlcNAc...) asparagine glycosylation sites follow: asparagine 155, asparagine 279, and asparagine 710. 2 residues coordinate a divalent metal cation: aspartate 720 and histidine 834. The N-linked (GlcNAc...) asparagine glycan is linked to asparagine 878.

Belongs to the chondroitin N-acetylgalactosaminyltransferase family. Requires Co(2+) as cofactor. Mn(2+) is required as a cofactor. The cofactor is Cd(2+). As to expression, detected at low levels in brain, cerebral cortex, uterus and small intestine.

It is found in the golgi apparatus. Its subcellular location is the golgi stack membrane. It catalyses the reaction 3-O-(beta-D-GlcA-(1-&gt;3)-beta-D-GalNAc-(1-&gt;4)-beta-D-GlcA-(1-&gt;3)-beta-D-Gal-(1-&gt;3)-beta-D-Gal-(1-&gt;4)-beta-D-Xyl)-L-seryl-[protein] + UDP-N-acetyl-alpha-D-galactosamine = 3-O-(beta-D-GalNAc-(1-&gt;4)-beta-D-GlcA-(1-&gt;3)-beta-D-GalNAc-(1-&gt;4)-beta-D-GlcA-(1-&gt;3)-beta-D-Gal-(1-&gt;3)-beta-D-Gal-(1-&gt;4)-beta-D-Xyl)-L-seryl-[protein] + UDP + H(+). The enzyme catalyses 3-O-{beta-D-GlcA-(1-&gt;3)-[beta-D-GalNAc-(1-&gt;4)-beta-D-GlcA-(1-&gt;3)](n)-beta-D-GalNAc-(1-&gt;4)-beta-D-GlcA-(1-&gt;3)-beta-D-Gal-(1-&gt;3)-beta-D-Gal-(1-&gt;4)-beta-D-Xyl}-L-seryl-[protein] + UDP-N-acetyl-alpha-D-galactosamine = 3-O-{[beta-D-GalNAc-(1-&gt;4)-beta-D-GlcA-(1-&gt;3)](n+1)-beta-D-GalNAc-(1-&gt;4)-beta-D-GlcA-(1-&gt;3)-beta-D-Gal-(1-&gt;3)-beta-D-Gal-(1-&gt;4)-beta-D-Xyl}-L-seryl-[protein] + UDP + H(+). It carries out the reaction 3-O-(beta-D-GalNAc-(1-&gt;4)-beta-D-GlcA-(1-&gt;3)-beta-D-Gal-(1-&gt;3)-beta-D-Gal-(1-&gt;4)-beta-D-Xyl)-L-seryl-[protein] + UDP-alpha-D-glucuronate = 3-O-(beta-D-GlcA-(1-&gt;3)-beta-D-GalNAc-(1-&gt;4)-beta-D-GlcA-(1-&gt;3)-beta-D-Gal-(1-&gt;3)-beta-D-Gal-(1-&gt;4)-beta-D-Xyl)-L-seryl-[protein] + UDP + H(+). The catalysed reaction is 3-O-{[beta-D-GalNAc-(1-&gt;4)-beta-D-GlcA-(1-&gt;3)](n)-beta-D-GalNAc-(1-&gt;4)-beta-D-GlcA-(1-&gt;3)-beta-D-Gal-(1-&gt;3)-beta-D-Gal-(1-&gt;4)-beta-D-Xyl}-L-seryl-[protein] + UDP-alpha-D-glucuronate = 3-O-{beta-D-GlcA-(1-&gt;3)-[beta-D-GalNAc-(1-&gt;4)-beta-D-GlcA-(1-&gt;3)](n)-beta-D-GalNAc-(1-&gt;4)-beta-D-GlcA-(1-&gt;3)-beta-D-Gal-(1-&gt;3)-beta-D-Gal-(1-&gt;4)-beta-D-Xyl}-L-seryl-[protein] + UDP + H(+). Its function is as follows. Has both beta-1,3-glucuronic acid and beta-1,4-N-acetylgalactosamine transferase activity. Transfers glucuronic acid (GlcUA) from UDP-GlcUA and N-acetylgalactosamine (GalNAc) from UDP-GalNAc to the non-reducing end of the elongating chondroitin polymer. Specific activity is much reduced compared to CHSY1. The polypeptide is Chondroitin sulfate synthase 3 (CHSY3) (Homo sapiens (Human)).